A 137-amino-acid chain; its full sequence is Large-conductance mechanosensitive channel (137 aa).

Transmembrane regions (helical) follow at residues 16-36 (VIDL…VDSI) and 83-103 (GNFI…FLMI).

It belongs to the MscL family. In terms of assembly, homopentamer.

It is found in the cell inner membrane. Functionally, channel that opens in response to stretch forces in the membrane lipid bilayer. May participate in the regulation of osmotic pressure changes within the cell. The polypeptide is Large-conductance mechanosensitive channel (Methylibium petroleiphilum (strain ATCC BAA-1232 / LMG 22953 / PM1)).